Reading from the N-terminus, the 561-residue chain is Endoplasmic reticulum oxidoreductin-1 (561 aa).

Positions 1-18 (MVKVLQLCFLSAISLVQA) are cleaved as a signal peptide. Asparagine 20 and asparagine 39 each carry an N-linked (GlcNAc...) asparagine glycan. 5 disulfides stabilise this stretch: cysteine 95–cysteine 349, cysteine 105–cysteine 110, cysteine 145–cysteine 166, cysteine 152–cysteine 295, and cysteine 352–cysteine 355. Asparagine 135 carries an N-linked (GlcNAc...) asparagine glycan. FAD is bound by residues arginine 187, threonine 189, tryptophan 200, serine 228, histidine 231, and arginine 260. Residue asparagine 342 is glycosylated (N-linked (GlcNAc...) asparagine). Cysteine 352 acts as the Nucleophile in catalysis. Cysteine 355 is an active-site residue. Asparagine 452 is a glycosylation site (N-linked (GlcNAc...) asparagine).

This sequence belongs to the EROs family. May function both as a monomer and a homodimer. The cofactor is FAD.

The protein resides in the endoplasmic reticulum membrane. Functionally, essential oxidoreductase that oxidizes proteins in the endoplasmic reticulum to produce disulfide bonds. Acts by oxidizing directly PDI1 isomerase through a direct disulfide exchange. Does not act as a direct oxidant of folding substrate, but relies on PDI1 to transfer oxidizing equivalent. Does not oxidize all pdi related proteins, suggesting that it can discriminate between PDI1 and related proteins. Its reoxidation probably involves electron transfer to molecular oxygen via FAD. Acts independently of glutathione. May be responsible for a significant proportion of reactive oxygen species (ROS) in the cell, thereby being a source of oxidative stress. The protein is Endoplasmic reticulum oxidoreductin-1 (ERO1) of Kluyveromyces lactis (strain ATCC 8585 / CBS 2359 / DSM 70799 / NBRC 1267 / NRRL Y-1140 / WM37) (Yeast).